Here is an 88-residue protein sequence, read N- to C-terminus: Small ribosomal subunit protein uS15 (88 aa).

It belongs to the universal ribosomal protein uS15 family. Part of the 30S ribosomal subunit. Forms a bridge to the 50S subunit in the 70S ribosome, contacting the 23S rRNA.

Functionally, one of the primary rRNA binding proteins, it binds directly to 16S rRNA where it helps nucleate assembly of the platform of the 30S subunit by binding and bridging several RNA helices of the 16S rRNA. Its function is as follows. Forms an intersubunit bridge (bridge B4) with the 23S rRNA of the 50S subunit in the ribosome. This Trichlorobacter lovleyi (strain ATCC BAA-1151 / DSM 17278 / SZ) (Geobacter lovleyi) protein is Small ribosomal subunit protein uS15.